Here is a 382-residue protein sequence, read N- to C-terminus: 1-deoxy-D-xylulose 5-phosphate reductoisomerase (382 aa).

The NADPH site is built by Thr10, Gly11, Ser12, Ile13, Gly36, and Asn122. 1-deoxy-D-xylulose 5-phosphate is bound at residue Lys123. NADPH is bound at residue Glu124. Mn(2+) is bound at residue Asp148. Positions 149, 150, 174, and 197 each coordinate 1-deoxy-D-xylulose 5-phosphate. Glu150 lines the Mn(2+) pocket. NADPH is bound at residue Gly203. Positions 210, 215, 216, and 219 each coordinate 1-deoxy-D-xylulose 5-phosphate. Residue Glu219 participates in Mn(2+) binding.

Belongs to the DXR family. The cofactor is Mg(2+). It depends on Mn(2+) as a cofactor.

The catalysed reaction is 2-C-methyl-D-erythritol 4-phosphate + NADP(+) = 1-deoxy-D-xylulose 5-phosphate + NADPH + H(+). Its pathway is isoprenoid biosynthesis; isopentenyl diphosphate biosynthesis via DXP pathway; isopentenyl diphosphate from 1-deoxy-D-xylulose 5-phosphate: step 1/6. Catalyzes the NADPH-dependent rearrangement and reduction of 1-deoxy-D-xylulose-5-phosphate (DXP) to 2-C-methyl-D-erythritol 4-phosphate (MEP). The protein is 1-deoxy-D-xylulose 5-phosphate reductoisomerase of Chlorobaculum tepidum (strain ATCC 49652 / DSM 12025 / NBRC 103806 / TLS) (Chlorobium tepidum).